The sequence spans 61 residues: Small ribosomal subunit protein uS14 (61 aa).

Positions 1-14 (MAKTSQKVRNHRPA) are enriched in basic residues. Residues 1-20 (MAKTSQKVRNHRPAKFSSRE) are disordered. Residues cysteine 24, cysteine 27, cysteine 40, and cysteine 43 each coordinate Zn(2+).

Belongs to the universal ribosomal protein uS14 family. Zinc-binding uS14 subfamily. Part of the 30S ribosomal subunit. Contacts proteins S3 and S10. Zn(2+) is required as a cofactor.

Functionally, binds 16S rRNA, required for the assembly of 30S particles and may also be responsible for determining the conformation of the 16S rRNA at the A site. The polypeptide is Small ribosomal subunit protein uS14 (Lactobacillus delbrueckii subsp. bulgaricus (strain ATCC 11842 / DSM 20081 / BCRC 10696 / JCM 1002 / NBRC 13953 / NCIMB 11778 / NCTC 12712 / WDCM 00102 / Lb 14)).